We begin with the raw amino-acid sequence, 146 residues long: Transcriptional regulator MraZ (146 aa).

2 consecutive SpoVT-AbrB domains span residues 4-46 (TVFR…SQTE) and 75-118 (TVKV…PEQR).

The protein belongs to the MraZ family. In terms of assembly, forms oligomers.

It localises to the cytoplasm. The protein localises to the nucleoid. This chain is Transcriptional regulator MraZ, found in Mesomycoplasma hyopneumoniae (strain 232) (Mycoplasma hyopneumoniae).